We begin with the raw amino-acid sequence, 225 residues long: Cell division protein SepF (225 aa).

Residues 22 to 116 (EYLDEPEPAR…TRGALAVDTR (95 aa)) are disordered. 2 stretches are compositionally biased toward basic and acidic residues: residues 28 to 54 (EPARRPARPARDSGRDPYLDRDDRDFA) and 77 to 86 (RYDGPRHSSR).

This sequence belongs to the SepF family. As to quaternary structure, homodimer. Interacts with FtsZ.

The protein resides in the cytoplasm. In terms of biological role, cell division protein that is part of the divisome complex and is recruited early to the Z-ring. Probably stimulates Z-ring formation, perhaps through the cross-linking of FtsZ protofilaments. Its function overlaps with FtsA. The sequence is that of Cell division protein SepF from Rhodococcus jostii (strain RHA1).